Consider the following 198-residue polypeptide: Recombination protein RecR (198 aa).

Residues 57-72 form a C4-type zinc finger; the sequence is CSVCGHITENDPCYIC. The Toprim domain maps to 80–175; it reads SVICVVEDDK…KVTRLAQGLS (96 aa).

Belongs to the RecR family.

Its function is as follows. May play a role in DNA repair. It seems to be involved in an RecBC-independent recombinational process of DNA repair. It may act with RecF and RecO. This Staphylococcus aureus (strain MRSA252) protein is Recombination protein RecR.